We begin with the raw amino-acid sequence, 279 residues long: DNA repair protein RecO (279 aa).

The protein belongs to the RecO family.

In terms of biological role, involved in DNA repair and RecF pathway recombination. The chain is DNA repair protein RecO from Thermosynechococcus vestitus (strain NIES-2133 / IAM M-273 / BP-1).